The primary structure comprises 339 residues: Protein RETICULATA-RELATED 2, chloroplastic (339 aa).

The transit peptide at 1–58 (MAAMAAKLHISTKSDQSNVRLPRLINLSRDPTARVLFPRNGSVSSLHTNFSSPNIMVP) directs the protein to the chloroplast. Residues 68–86 (IGNHGGGSGSGGGGGGYGG) are compositionally biased toward gly residues. Positions 68-92 (IGNHGGGSGSGGGGGGYGGSEEEES) are disordered. 2 consecutive transmembrane segments (helical) span residues 148 to 168 (FVFS…YLLA) and 213 to 233 (VFAT…NGLI).

This sequence belongs to the RETICULATA family.

Its subcellular location is the plastid. The protein localises to the chloroplast membrane. May play a role in leaf development. The chain is Protein RETICULATA-RELATED 2, chloroplastic from Arabidopsis thaliana (Mouse-ear cress).